The primary structure comprises 236 residues: uncharacterized protein (236 aa).

Residues 117-160 (RYLSKQTDRNEFITTAESYIGISKHKSTNITYKLPLKEQFCNMS) enclose the RPE1 insert domain.

This is an uncharacterized protein from Rickettsia prowazekii (strain Madrid E).